Consider the following 340-residue polypeptide: Methionine import ATP-binding protein MetN 2 (340 aa).

Residues 5-244 (VRFESVTKTF…PQAPASKSFV (240 aa)) form the ABC transporter domain. 41-48 (GYSGAGKS) is an ATP binding site.

The protein belongs to the ABC transporter superfamily. Methionine importer (TC 3.A.1.24) family. The complex is composed of two ATP-binding proteins (MetN), two transmembrane proteins (MetI) and a solute-binding protein (MetQ).

It localises to the cell membrane. The enzyme catalyses L-methionine(out) + ATP + H2O = L-methionine(in) + ADP + phosphate + H(+). The catalysed reaction is D-methionine(out) + ATP + H2O = D-methionine(in) + ADP + phosphate + H(+). Functionally, part of the ABC transporter complex MetNIQ involved in methionine import. Responsible for energy coupling to the transport system. The polypeptide is Methionine import ATP-binding protein MetN 2 (Rhodococcus jostii (strain RHA1)).